Here is a 215-residue protein sequence, read N- to C-terminus: Polysialic acid O-acetyltransferase (215 aa).

Acetyl-CoA contacts are provided by residues 119–121 (DMH), arginine 148, lysine 154, serine 166, 171–172 (YK), and lysine 190.

Belongs to the transferase hexapeptide repeat family. Homotrimer.

The enzyme catalyses [(2-&gt;6)-alpha-D-glucosyl-(1-&gt;4)-N-acetyl-alpha-D-neuraminosyl](n) + n acetyl-CoA = [(2-&gt;6)-alpha-D-glucosyl-(1-&gt;4)-N,7-O-diacetyl-alpha-D-neuraminosyl](n) + n CoA. It carries out the reaction [(2-&gt;6)-alpha-D-glucosyl-(1-&gt;4)-N-acetyl-alpha-D-neuraminosyl](n) + n acetyl-CoA = [(2-&gt;6)-alpha-D-glucosyl-(1-&gt;4)-N,O(9)-diacetyl-alpha-D-neuraminosyl](n) + n CoA. Functionally, catalyzes the O-acetylation of capsular polymeric sialic acid consisting of polymers of (2-&gt;6)-alpha-D-glucosyl-(1-&gt;4)-N-acetyl-alpha-D-neuraminosyl residues. Shows high substrate specificity toward polymers of sialic acid that contains a large number of residues. This is Polysialic acid O-acetyltransferase from Neisseria meningitidis.